A 236-amino-acid polypeptide reads, in one-letter code: Transcriptional activator protein SolR (236 aa).

In terms of domain architecture, HTH luxR-type spans 169–234 (VPESSAALTA…QAVVKAIAIG (66 aa)). A DNA-binding region (H-T-H motif) is located at residues 193 to 212 (AYEIGQILRISERTVNFHVN).

Belongs to the autoinducer-regulated transcriptional regulatory protein family.

This chain is Transcriptional activator protein SolR (solR), found in Ralstonia nicotianae (strain ATCC BAA-1114 / GMI1000) (Ralstonia solanacearum).